The chain runs to 152 residues: Endoribonuclease YbeY (152 aa).

Residues His-113, His-117, and His-123 each contribute to the Zn(2+) site.

This sequence belongs to the endoribonuclease YbeY family. Zn(2+) is required as a cofactor.

It localises to the cytoplasm. Its function is as follows. Single strand-specific metallo-endoribonuclease involved in late-stage 70S ribosome quality control and in maturation of the 3' terminus of the 16S rRNA. The protein is Endoribonuclease YbeY of Delftia acidovorans (strain DSM 14801 / SPH-1).